An 82-amino-acid chain; its full sequence is Small ribosomal subunit protein bS18 (82 aa).

This sequence belongs to the bacterial ribosomal protein bS18 family. As to quaternary structure, part of the 30S ribosomal subunit. Forms a tight heterodimer with protein bS6.

Binds as a heterodimer with protein bS6 to the central domain of the 16S rRNA, where it helps stabilize the platform of the 30S subunit. The polypeptide is Small ribosomal subunit protein bS18 (Bifidobacterium longum (strain NCC 2705)).